Here is a 339-residue protein sequence, read N- to C-terminus: Anthranilate phosphoribosyltransferase (339 aa).

5-phospho-alpha-D-ribose 1-diphosphate is bound by residues Gly81, 84 to 85 (GD), 91 to 94 (NIST), 109 to 117 (KHGNRAASS), and Ser121. Residue Gly81 coordinates anthranilate. Ser93 contributes to the Mg(2+) binding site. Asn112 serves as a coordination point for anthranilate. Arg167 provides a ligand contact to anthranilate. 2 residues coordinate Mg(2+): Asp226 and Glu227.

Belongs to the anthranilate phosphoribosyltransferase family. In terms of assembly, homodimer. Mg(2+) serves as cofactor.

The catalysed reaction is N-(5-phospho-beta-D-ribosyl)anthranilate + diphosphate = 5-phospho-alpha-D-ribose 1-diphosphate + anthranilate. The protein operates within amino-acid biosynthesis; L-tryptophan biosynthesis; L-tryptophan from chorismate: step 2/5. Its function is as follows. Catalyzes the transfer of the phosphoribosyl group of 5-phosphorylribose-1-pyrophosphate (PRPP) to anthranilate to yield N-(5'-phosphoribosyl)-anthranilate (PRA). This Maricaulis maris (strain MCS10) (Caulobacter maris) protein is Anthranilate phosphoribosyltransferase.